The primary structure comprises 186 residues: dCTP deaminase (186 aa).

107 to 112 (KSSYAR) is a dCTP binding site. Glutamate 133 acts as the Proton donor/acceptor in catalysis. The dCTP site is built by glutamine 152, tyrosine 166, and glutamine 176.

This sequence belongs to the dCTP deaminase family. As to quaternary structure, homotrimer.

It carries out the reaction dCTP + H2O + H(+) = dUTP + NH4(+). The protein operates within pyrimidine metabolism; dUMP biosynthesis; dUMP from dCTP (dUTP route): step 1/2. Functionally, catalyzes the deamination of dCTP to dUTP. This is dCTP deaminase from Chloroflexus aurantiacus (strain ATCC 29366 / DSM 635 / J-10-fl).